A 778-amino-acid chain; its full sequence is MAAAGLVAVVAAAEYSGPVASGGNLSGATCGPSPGLGPGPGPGSWSRSVDRALEEAAVTGVLSLSGRKLREFPRGAANHDLTDTTRADLSRNRLSEIPMEACHFVSLESLNLYQNCIRYIPEAVLNLQALTFLNISRNQLSTLPVHLCNLPLKVLIASNNKLVSLPEEIGHLRHLTELDVSCNEIQTVPSQIGNLEALRDFNVRRNHLLRLPEELAEVPLIRLDFSCNKITVIPVCYRNLRHLQVITLDNNPLQSPPAQICIKGKIHIFKYLNIQACKIAPDLPDYERRPLGFGSCHEELYSGRPYGALDSGFNSVDSGDKRWSGNEPTDEFSDLPLRVAEITKEQRLRRESQYQENRSSVAVTNGGVEHDLDQIDYIDSCTTEEEENDVKQPKSLDTNSLSSQFMAYIEQRRISHEVSPVKPIAVREFQKTEDMKRYSHQNRVPVEPSLVLSMPPSHNQLSHSDLELHQRREQSIECTRREAQLAALQYEEEKIRTKQIQRDAVLDFVKQKASHNPQRQQPPGNGECSFPSRRSQHTDDSALLVSLSGLDGVSCVATRPHSSAFTPLKSENRVDVTSSFPMTETVHHSPAYSFPAATQRNQPQRPESFLFRAAVRAEANKGRASPLLLSSAPATDPTDAITRQREEELKLIDQLRKHIEYRLKVSLPCDLGAALTDGVVLCHLANHVRPRSVPSIHVPSPAVPKLTMAKCRRNVENFLDACRKIGVPQEQLCLPLHILEEKGLGQVAVTVQALLELAPPKQPPPQQPQQQQPQLSAV.

10 LRR repeats span residues 56–79 (AAVT…AANH), 81–104 (LTDT…ACHF), 105–127 (VSLE…VLNL), 128–150 (QALT…LCNL), 152–172 (LKVL…IGHL), 173–195 (RHLT…IGNL), 197–218 (ALRD…LAEV), 220–239 (LIRL…CYRN), 240–264 (LRHL…CIKG), and 266–290 (IHIF…ERRP). The tract at residues 56 to 290 (AAVTGVLSLS…PDLPDYERRP (235 aa)) is mediates interaction with DOCK7. Phosphoserine occurs at positions 324, 415, and 419. The segment at 382–642 (TTEEEENDVK…PATDPTDAIT (261 aa)) is mediates direct interaction with MYO6. A disordered region spans residues 511-536 (QKASHNPQRQQPPGNGECSFPSRRSQ). Polar residues predominate over residues 514 to 523 (SHNPQRQQPP). Phosphoserine is present on residues serine 608 and serine 625. The Calponin-homology (CH) domain maps to 645–758 (REEELKLIDQ…VTVQALLELA (114 aa)). Positions 758–778 (APPKQPPPQQPQQQQPQLSAV) are disordered. Low complexity predominate over residues 768 to 778 (PQQQQPQLSAV).

Component of the DOCK7-induced septin displacement/DISP complex, at least composed of DOCK7, LRCH3 and MYO6.

The protein localises to the cytoplasm. Its function is as follows. As part of the DISP complex, may regulate the association of septins with actin and thereby regulate the actin cytoskeleton. The chain is DISP complex protein LRCH3 from Mus musculus (Mouse).